Consider the following 242-residue polypeptide: Vacuole localized DSC protein 1 (242 aa).

2 consecutive transmembrane segments (helical) span residues 128 to 148 (PYGFVIMLLIREFTCPVPTAF) and 152 to 172 (LLLVLLDILLLFCQIVIINGS).

In terms of assembly, part of the vacuole-localized DSC E3 ligase complex composed of at least TUL1, DSC2, DSC3, UBX3, CDC48 and VLD1.

The protein localises to the vacuole membrane. In terms of biological role, component of the vacuole-localized DSC E3 ubiquitin ligase complex involved in the targeting of the complex to the vacuole membrane via the AP3 pathway to ubiquinate vacuolar membrane proteins. Competes with GLD1 to determine the subcellular localizations of the DSC complex. This chain is Vacuole localized DSC protein 1, found in Saccharomyces cerevisiae (strain ATCC 204508 / S288c) (Baker's yeast).